Here is a 649-residue protein sequence, read N- to C-terminus: Echinoderm microtubule-associated protein-like 2 (649 aa).

A tandem atypical propeller in EMLs region spans residues lysine 10–valine 649. Coiled-coil stretches lie at residues isoleucine 13 to glutamate 58 and tyrosine 73 to histidine 114. WD repeat units follow at residues lysine 56–valine 93, arginine 97–serine 144, histidine 151–tryptophan 192, glutamate 195–leucine 234, lysine 241–lysine 280, isoleucine 285–serine 323, phenylalanine 369–serine 406, glutamine 410–threonine 447, leucine 452–valine 489, lysine 495–proline 535, phenylalanine 564–tyrosine 602, and alanine 609–valine 648.

The protein belongs to the WD repeat EMAP family. In terms of assembly, homotrimer; self-association is mediated by the N-terminal coiled coil. Interacts with GRID2 and may also interact with GRID1. Interacts with EML3. Binds unpolymerized tubulins via its WD repeat region. Ubiquitous.

The protein localises to the cytoplasm. The protein resides in the cytoskeleton. It is found in the spindle. Tubulin binding protein that inhibits microtubule nucleation and growth, resulting in shorter microtubules. The protein is Echinoderm microtubule-associated protein-like 2 (EML2) of Homo sapiens (Human).